Consider the following 118-residue polypeptide: Large ribosomal subunit protein bL20 (118 aa).

This sequence belongs to the bacterial ribosomal protein bL20 family.

Binds directly to 23S ribosomal RNA and is necessary for the in vitro assembly process of the 50S ribosomal subunit. It is not involved in the protein synthesizing functions of that subunit. The protein is Large ribosomal subunit protein bL20 of Thermosipho melanesiensis (strain DSM 12029 / CIP 104789 / BI429).